An 860-amino-acid polypeptide reads, in one-letter code: Spindle and centriole-associated protein 1 (860 aa).

Disordered regions lie at residues arginine 127–glutamine 150, aspartate 172–arginine 201, alanine 230–glutamine 250, and proline 294–serine 332. Polar residues-rich tracts occupy residues proline 139–glutamine 150, glutamate 190–asparagine 200, and alanine 230–leucine 245. Residue threonine 236 is modified to Phosphothreonine. Serine 240 is subject to Phosphoserine. Residues serine 317–threonine 329 are compositionally biased toward low complexity. The stretch at arginine 383 to valine 439 forms a coiled coil. The disordered stretch occupies residues proline 623–proline 645. Residues serine 627–proline 642 show a composition bias toward low complexity. Serine 648 carries the post-translational modification Phosphoserine. The segment at isoleucine 693–threonine 718 is disordered. The stretch at serine 729–lysine 757 forms a coiled coil. Serine 765, serine 766, serine 769, and serine 824 each carry phosphoserine. Residues glycine 792–proline 860 are disordered. Over residues valine 804 to serine 824 the composition is skewed to low complexity.

As to quaternary structure, interacts with CEP120.

It is found in the cytoplasm. Its subcellular location is the cytoskeleton. It localises to the microtubule organizing center. The protein localises to the centrosome. The protein resides in the centriole. It is found in the spindle. Functionally, regulator required for centriole duplication, for proper bipolar spindle formation and chromosome congression in mitosis. This chain is Spindle and centriole-associated protein 1 (Spice1), found in Mus musculus (Mouse).